Consider the following 302-residue polypeptide: MGGNNDGVSGAACLKPLNGVSPTYVPSAGAGALYFLIGSGLGVVAVLHASGLAEVSGEWASAARWTEVSREWPSAARWAAQLAGSVGAQRLLLATSLLFLAVSVWRLARRCAAVEGRVGSTDSAVRALHVGGVVCAVCGSKIRALKRGCRGVERTRSVDSSKPVSRSLAAEFDQEADGEEEDNAGETSDPDDGSVQYLRRRLKEEMLLKEVALEELEKERHAAASAADEAMSKIACLRSEKALVEREARQFQEMMQQKQMYDRQVIESLQWVIMKSGMQGWEPEAITDRALSETSEDDRDKK.

The next 2 membrane-spanning stretches (helical) occupy residues 27–47 (SAGAGALYFLIGSGLGVVAVL) and 82–102 (LAGSVGAQRLLLATSLLFLAV). Residues 160–195 (SSKPVSRSLAAEFDQEADGEEEDNAGETSDPDDGSV) form a disordered region. A compositionally biased stretch (acidic residues) spans 172–192 (FDQEADGEEEDNAGETSDPDD). The 107-residue stretch at 193-299 (GSVQYLRRRL…ALSETSEDDR (107 aa)) folds into the GTD-binding domain. Residues 199–254 (RRRLKEEMLLKEVALEELEKERHAAASAADEAMSKIACLRSEKALVEREARQFQEM) adopt a coiled-coil conformation. Residues 283–302 (PEAITDRALSETSEDDRDKK) form a disordered region.

Interacts (via C-terminus) with both 22 kDa and 19 kDa alpha-zeins. Interacts (via C-terminus) with OP10 (via N-terminus). In terms of tissue distribution, expressed in endosperm. Not detected in embryo, leaves and roots.

The protein resides in the endoplasmic reticulum membrane. Functionally, involved in protein body development and 22 kDa alpha-zein localization. The protein is Protein FLOURY 1 of Zea mays (Maize).